The following is a 93-amino-acid chain: Small ribosomal subunit protein uS19 (93 aa).

The protein belongs to the universal ribosomal protein uS19 family.

Functionally, protein S19 forms a complex with S13 that binds strongly to the 16S ribosomal RNA. This chain is Small ribosomal subunit protein uS19, found in Rhodococcus erythropolis (strain PR4 / NBRC 100887).